The sequence spans 106 residues: Replication restart protein PriB (106 aa).

An SSB domain is found at 4–103; that stretch reads TNRLVLSGTV…LHAEQIEFID (100 aa).

Belongs to the PriB family. In terms of assembly, homodimer. Interacts with PriA and DnaT. Component of the replication restart primosome. Primosome assembly occurs via a 'hand-off' mechanism. PriA binds to replication forks, subsequently PriB then DnaT bind; DnaT then displaces ssDNA to generate the helicase loading substrate.

Functionally, involved in the restart of stalled replication forks, which reloads the replicative helicase on sites other than the origin of replication; the PriA-PriB pathway is the major replication restart pathway. During primosome assembly it facilitates complex formation between PriA and DnaT on DNA; stabilizes PriA on DNA. Stimulates the DNA unwinding activity of PriA helicase. This is Replication restart protein PriB from Yersinia enterocolitica serotype O:8 / biotype 1B (strain NCTC 13174 / 8081).